Reading from the N-terminus, the 676-residue chain is Solute carrier family 26 member 10 (676 aa).

Positions 1 to 24 (MSGPLASGTCSDPEEVSDLKSPLS) are disordered. The next 11 membrane-spanning stretches (helical) occupy residues 101-121 (AVAGVTVGVVHVPQGMAFALL), 124-144 (VPPVFGLYTSFFPVLIYSLLG), 149-165 (LSTGTFAVLSLMTGSVV), 190-210 (VGAAAAVAFGSGALMLGMFVL), 226-246 (ALTSGAALHVLVSQLPSLLGL), 267-287 (ALSQSSPAEVTISALSLVLLV), 300-320 (LLTPIPGEVVMVLLATVLCFT), 353-373 (ILADSLPISLVTFAVSTSLAS), 398-418 (ISSLFSCFPNSATLATTSLLV), 426-446 (LAGLFSCAVVLAALLWLRPFF), and 487-507 (IVTWVAVVTLNVDLGLAVGVV). Residues 539–660 (ESRKLLQVPG…VSVQDAAAHA (122 aa)) enclose the STAS domain.

This sequence belongs to the SLC26A/SulP transporter (TC 2.A.53) family.

The protein resides in the membrane. Its function is as follows. Chloride/bicarbonate exchanger. The sequence is that of Solute carrier family 26 member 10 (Slc26a10) from Mus musculus (Mouse).